The primary structure comprises 30 residues: Acyl-CoA-binding protein 1 (30 aa).

Basic and acidic residues predominate over residues 1–15 (ALKDEFEEHAEKAKT). Residues 1–30 (ALKDEFEEHAEKAKTLPENTSNENKLILYG) form a disordered region. The region spanning 2–30 (LKDEFEEHAEKAKTLPENTSNENKLILYG) is the ACB domain.

The protein belongs to the ACBP family.

The protein resides in the cytoplasm. In terms of biological role, binds medium- and long-chain acyl-CoA esters with very high affinity and may function as an intracellular carrier of acyl-CoA esters. This chain is Acyl-CoA-binding protein 1, found in Digitalis lanata (Grecian foxglove).